Here is a 582-residue protein sequence, read N- to C-terminus: WD repeat-containing protein JIP5 (582 aa).

WD repeat units follow at residues 27–68 (KYPE…EAQS), 125–168 (RHKG…VLSK), 177–216 (DKND…SNQL), 265–310 (DQED…LMDQ), and 373–410 (GPAD…LNSD). 2 disordered regions span residues 405–496 (ETLN…DTEL) and 531–582 (TKEQ…FDDL). Composition is skewed to acidic residues over residues 410-438 (DSDD…DDDV) and 447-485 (EVND…ENVT). 2 stretches are compositionally biased toward basic and acidic residues: residues 531–540 (TKEQSTKKAD) and 570–582 (QKHE…FDDL).

Belongs to the WD repeat WDR55 family.

It is found in the nucleus. The protein resides in the nucleolus. This Debaryomyces hansenii (strain ATCC 36239 / CBS 767 / BCRC 21394 / JCM 1990 / NBRC 0083 / IGC 2968) (Yeast) protein is WD repeat-containing protein JIP5 (JIP5).